A 461-amino-acid polypeptide reads, in one-letter code: Glutamate-gated chloride channel alpha (461 aa).

The first 20 residues, 1-20 (MATWIVGKLIIASLILGIQA), serve as a signal peptide directing secretion. Topologically, residues 21 to 275 (QQARTKSQDI…TTIQLKREFS (255 aa)) are extracellular. Residues R98, R117, and S182 each contribute to the L-glutamate site. C191 and C205 are disulfide-bonded. S211 serves as a coordination point for L-glutamate. A glycan (N-linked (GlcNAc...) asparagine) is linked at N246. An intrachain disulfide couples C252 to C263. The chain crosses the membrane as a helical span at residues 276-298 (FYLLQLYIPSCMLVIVSWVSFWF). The Cytoplasmic portion of the chain corresponds to 299–303 (DRTAI). The chain crosses the membrane as a helical span at residues 304–325 (PARVTLGVTTLLTMTAQSAGIN). Residues 326–332 (SQLPPVS) are Extracellular-facing. A helical membrane pass occupies residues 333 to 353 (YIKAIDVWIGACMTFIFCALL). Residues 354–432 (EFALVNHIAN…EWNDISKRVD (79 aa)) lie on the Cytoplasmic side of the membrane. Residues 433–454 (LISRALFPVLFFVFNILYWSRF) form a helical membrane-spanning segment. The Extracellular segment spans residues 455–461 (GQQNVLF).

It belongs to the ligand-gated ion channel (TC 1.A.9) family. Glutamate-gated chloride channel (TC 1.A.9.4) subfamily. In terms of assembly, pentamer. Homooligomer, forms functional heterooligomers with glc-2.

It localises to the postsynaptic cell membrane. The protein resides in the cell membrane. Glutamate-gated chloride channel subunit; channel properties depend on the subunit composition. Glutamate binding triggers a rapidly reversible current in heteromeric channels formed by glc-1 and glc-2, while the anti-helmintic drug ivermectin and other avermectins trigger a permanently open channel configuration. Channels containing only glc-1 are activated by ivermectin, but not by glutamate alone (in vitro). The heteromeric channel formed by glc-1 and glc-2 is also activated by ibotenate, and it is blocked by picrotoxin and flufenamic acid. Plays a role in the regulation of locomotor behavior. The polypeptide is Glutamate-gated chloride channel alpha (Caenorhabditis elegans).